The following is a 946-amino-acid chain: Bifunctional glutamine synthetase adenylyltransferase/adenylyl-removing enzyme (946 aa).

Positions 1–440 (MKPLSSPLQQ…VFNELIGDDE (440 aa)) are adenylyl removase. The adenylyl transferase stretch occupies residues 449-946 (SEQWRELWQD…ASWQKWLVEE (498 aa)).

It belongs to the GlnE family. Mg(2+) serves as cofactor.

It carries out the reaction [glutamine synthetase]-O(4)-(5'-adenylyl)-L-tyrosine + phosphate = [glutamine synthetase]-L-tyrosine + ADP. It catalyses the reaction [glutamine synthetase]-L-tyrosine + ATP = [glutamine synthetase]-O(4)-(5'-adenylyl)-L-tyrosine + diphosphate. Involved in the regulation of glutamine synthetase GlnA, a key enzyme in the process to assimilate ammonia. When cellular nitrogen levels are high, the C-terminal adenylyl transferase (AT) inactivates GlnA by covalent transfer of an adenylyl group from ATP to specific tyrosine residue of GlnA, thus reducing its activity. Conversely, when nitrogen levels are low, the N-terminal adenylyl removase (AR) activates GlnA by removing the adenylyl group by phosphorolysis, increasing its activity. The regulatory region of GlnE binds the signal transduction protein PII (GlnB) which indicates the nitrogen status of the cell. The protein is Bifunctional glutamine synthetase adenylyltransferase/adenylyl-removing enzyme of Escherichia coli O45:K1 (strain S88 / ExPEC).